The primary structure comprises 380 residues: Small ribosomal subunit protein uS3m (380 aa).

Belongs to the universal ribosomal protein uS3 family.

Its subcellular location is the mitochondrion. In terms of biological role, essential for mitochondrial protein synthesis and required for the maturation of small ribosomal subunits. This Cyberlindnera mrakii (Yeast) protein is Small ribosomal subunit protein uS3m (VAR1).